The sequence spans 304 residues: Non-specific ribonucleoside hydrolase RihC (304 aa).

Residue His-233 is part of the active site.

This sequence belongs to the IUNH family. RihC subfamily.

Its function is as follows. Hydrolyzes both purine and pyrimidine ribonucleosides with a broad-substrate specificity. This Escherichia coli (strain SE11) protein is Non-specific ribonucleoside hydrolase RihC.